We begin with the raw amino-acid sequence, 208 residues long: Thymidylate kinase (208 aa).

10–17 (GIDGCGKT) is an ATP binding site.

Belongs to the thymidylate kinase family.

It carries out the reaction dTMP + ATP = dTDP + ADP. Phosphorylation of dTMP to form dTDP in both de novo and salvage pathways of dTTP synthesis. This chain is Thymidylate kinase, found in Caldanaerobacter subterraneus subsp. tengcongensis (strain DSM 15242 / JCM 11007 / NBRC 100824 / MB4) (Thermoanaerobacter tengcongensis).